Reading from the N-terminus, the 414-residue chain is Esterase FrsA (414 aa).

Belongs to the FrsA family.

The catalysed reaction is a carboxylic ester + H2O = an alcohol + a carboxylate + H(+). In terms of biological role, catalyzes the hydrolysis of esters. This is Esterase FrsA from Shigella boydii serotype 4 (strain Sb227).